The following is a 1059-amino-acid chain: Protein cappuccino (1059 aa).

Composition is skewed to polar residues over residues A62–G80 and A90–S123. Disordered regions lie at residues A62–T146 and Q448–P647. The span at L133 to F142 shows a compositional bias: pro residues. A compositionally biased stretch (basic and acidic residues) spans S468–H481. Residues P480–S560 enclose the FH1 domain. A compositionally biased stretch (pro residues) spans V483 to P541. In terms of domain architecture, FH2 spans R585 to S1032. The segment covering T620–S629 has biased composition (polar residues). The tract at residues K1049–N1059 is important for interaction with spir.

The protein belongs to the formin homology family. Cappuccino subfamily. In terms of assembly, interacts with wash. Interacts with spir.

The protein localises to the cytoplasm. It is found in the cytoskeleton. It localises to the cytosol. Its subcellular location is the membrane. The protein resides in the cytoplasmic vesicle membrane. Functionally, acts as an actin nucleation factor and promotes assembly of actin filaments together with spir. May play a role in intracellular vesicle transport along actin fibers, providing a novel link between actin cytoskeleton dynamics and intracellular transport. This is Protein cappuccino (capu) from Drosophila melanogaster (Fruit fly).